The following is a 588-amino-acid chain: Aspartate--tRNA ligase (588 aa).

Glu-172 provides a ligand contact to L-aspartate. Residues 196–199 form an aspartate region; the sequence is QLFK. Arg-218 provides a ligand contact to L-aspartate. ATP is bound by residues 218 to 220 and Gln-227; that span reads RDE. His-449 serves as a coordination point for L-aspartate. Glu-483 contacts ATP. L-aspartate is bound at residue Arg-490. Residue 535–538 participates in ATP binding; the sequence is GLDR.

The protein belongs to the class-II aminoacyl-tRNA synthetase family. Type 1 subfamily. In terms of assembly, homodimer.

Its subcellular location is the cytoplasm. It carries out the reaction tRNA(Asp) + L-aspartate + ATP = L-aspartyl-tRNA(Asp) + AMP + diphosphate. Functionally, catalyzes the attachment of L-aspartate to tRNA(Asp) in a two-step reaction: L-aspartate is first activated by ATP to form Asp-AMP and then transferred to the acceptor end of tRNA(Asp). This Pasteurella multocida (strain Pm70) protein is Aspartate--tRNA ligase.